Consider the following 347-residue polypeptide: Holliday junction branch migration complex subunit RuvB (347 aa).

The large ATPase domain (RuvB-L) stretch occupies residues 1–183 (MTPPSRIVTP…FGIPIRLNFY (183 aa)). ATP is bound by residues leucine 22, arginine 23, glycine 64, lysine 67, threonine 68, threonine 69, 130 to 132 (EDF), arginine 173, tyrosine 183, and arginine 220. Threonine 68 serves as a coordination point for Mg(2+). The segment at 184–254 (TVEELEGIVS…IADHALSALE (71 aa)) is small ATPAse domain (RuvB-S). The segment at 257-347 (AAGLDAMDRR…QFGLFGGDEE (91 aa)) is head domain (RuvB-H). DNA is bound by residues arginine 293, arginine 312, and arginine 317.

The protein belongs to the RuvB family. In terms of assembly, homohexamer. Forms an RuvA(8)-RuvB(12)-Holliday junction (HJ) complex. HJ DNA is sandwiched between 2 RuvA tetramers; dsDNA enters through RuvA and exits via RuvB. An RuvB hexamer assembles on each DNA strand where it exits the tetramer. Each RuvB hexamer is contacted by two RuvA subunits (via domain III) on 2 adjacent RuvB subunits; this complex drives branch migration. In the full resolvosome a probable DNA-RuvA(4)-RuvB(12)-RuvC(2) complex forms which resolves the HJ.

It is found in the cytoplasm. The catalysed reaction is ATP + H2O = ADP + phosphate + H(+). In terms of biological role, the RuvA-RuvB-RuvC complex processes Holliday junction (HJ) DNA during genetic recombination and DNA repair, while the RuvA-RuvB complex plays an important role in the rescue of blocked DNA replication forks via replication fork reversal (RFR). RuvA specifically binds to HJ cruciform DNA, conferring on it an open structure. The RuvB hexamer acts as an ATP-dependent pump, pulling dsDNA into and through the RuvAB complex. RuvB forms 2 homohexamers on either side of HJ DNA bound by 1 or 2 RuvA tetramers; 4 subunits per hexamer contact DNA at a time. Coordinated motions by a converter formed by DNA-disengaged RuvB subunits stimulates ATP hydrolysis and nucleotide exchange. Immobilization of the converter enables RuvB to convert the ATP-contained energy into a lever motion, pulling 2 nucleotides of DNA out of the RuvA tetramer per ATP hydrolyzed, thus driving DNA branch migration. The RuvB motors rotate together with the DNA substrate, which together with the progressing nucleotide cycle form the mechanistic basis for DNA recombination by continuous HJ branch migration. Branch migration allows RuvC to scan DNA until it finds its consensus sequence, where it cleaves and resolves cruciform DNA. The polypeptide is Holliday junction branch migration complex subunit RuvB (Rhodopseudomonas palustris (strain BisA53)).